Consider the following 388-residue polypeptide: MKIHEFQTKELFRTYGIPTPEGRMVNTAEAAGEAAGELGGFPVVVKAQIHAGGRGKGGGVKLAKSADEAKSLAGAMLGSRLVTPQTGPEGTLVQKVLVEQGVSIAKELYLSVVADRETAGIVIMASEAGGMDIEAVAETTPEKILKVFVNPLAGLSAFHCRQAAYGLNLPAEAIKPFTQVVSGLFKLFVDYDASLVEINPLILTTDKAVMALDAKINFDDSALFRHKDILALRDTDEEDPLEVEASRFNLNYINMDGNVGNMVNGAGLAMATMDIIKLAGAEPANFLDVGGGANAEMVENGFRIILSDPKVKCILVNIFGGILRCDVLASGIVQAARNTAIHVPLVVRMEGTNVDEGKRILAESGLDLHSAASLKDAAARVAQVVAAA.

The 236-residue stretch at 9–244 (KELFRTYGIP…TDEEDPLEVE (236 aa)) folds into the ATP-grasp domain. Residues Lys-46, 53–55 (GRG), Glu-99, Val-102, and Glu-107 each bind ATP. Mg(2+) contacts are provided by Asn-199 and Asp-213. Residues Asn-264 and 321–323 (GIL) contribute to the substrate site.

It belongs to the succinate/malate CoA ligase beta subunit family. As to quaternary structure, heterotetramer of two alpha and two beta subunits. Mg(2+) is required as a cofactor.

The catalysed reaction is succinate + ATP + CoA = succinyl-CoA + ADP + phosphate. It carries out the reaction GTP + succinate + CoA = succinyl-CoA + GDP + phosphate. It functions in the pathway carbohydrate metabolism; tricarboxylic acid cycle; succinate from succinyl-CoA (ligase route): step 1/1. Succinyl-CoA synthetase functions in the citric acid cycle (TCA), coupling the hydrolysis of succinyl-CoA to the synthesis of either ATP or GTP and thus represents the only step of substrate-level phosphorylation in the TCA. The beta subunit provides nucleotide specificity of the enzyme and binds the substrate succinate, while the binding sites for coenzyme A and phosphate are found in the alpha subunit. The polypeptide is Succinate--CoA ligase [ADP-forming] subunit beta (Desulfosudis oleivorans (strain DSM 6200 / JCM 39069 / Hxd3) (Desulfococcus oleovorans)).